The primary structure comprises 663 residues: General transcription and DNA repair factor IIH subunit tcf-29 (663 aa).

BSD domains lie at 147-206 (WFED…RAYA) and 227-278 (ENGE…LSKK). Disordered regions lie at residues 452 to 491 (DSDGRGGIDLHRSIGVDPDSDDEGNNSLDSKSGPKPQHVG) and 513 to 535 (HLTTTTTHGGSHTTTTNASEERP). Residues 453–465 (SDGRGGIDLHRSI) show a composition bias toward basic and acidic residues. The span at 515-528 (TTTTTHGGSHTTTT) shows a compositional bias: low complexity.

The protein belongs to the TFB1 family. In terms of assembly, component of the 7-subunit TFIIH core complex composed of XPB/rad25, XPD/dnr-10, tcf-30/SSL1, tcf-29/TFB1, tcf-11/TFB2, tcf-14/TFB4 and rtf-1/TFB5, which is active in NER. The core complex associates with the 3-subunit CTD-kinase module TFIIK composed of div-66/cyclin H, prk-3/KIN28 and rtf-2/TFB3 to form the 10-subunit holoenzyme (holo-TFIIH) active in transcription.

Its subcellular location is the nucleus. Component of the general transcription and DNA repair factor IIH (TFIIH) core complex, which is involved in general and transcription-coupled nucleotide excision repair (NER) of damaged DNA and, when complexed to TFIIK, in RNA transcription by RNA polymerase II. In NER, TFIIH acts by opening DNA around the lesion to allow the excision of the damaged oligonucleotide and its replacement by a new DNA fragment. In transcription, TFIIH has an essential role in transcription initiation. When the pre-initiation complex (PIC) has been established, TFIIH is required for promoter opening and promoter escape. Phosphorylation of the C-terminal tail (CTD) of the largest subunit of RNA polymerase II by the kinase module TFIIK controls the initiation of transcription. This is General transcription and DNA repair factor IIH subunit tcf-29 (tcf-29) from Neurospora crassa (strain ATCC 24698 / 74-OR23-1A / CBS 708.71 / DSM 1257 / FGSC 987).